The following is a 100-amino-acid chain: Putative antiporter subunit mnhF2 (100 aa).

The next 3 membrane-spanning stretches (helical) occupy residues 5–25 (ITHIMIISSLIIFGIALIICL), 38–60 (VVTFDTTSAVVMSIVGVLSVLMG), and 70–92 (LIAIISFVSSVSISRFIGGGHVF).

The protein belongs to the CPA3 antiporters (TC 2.A.63) subunit F family. May form a heterooligomeric complex that consists of seven subunits: mnhA2, mnhB2, mnhC2, mnhD2, mnhE2, mnhF2 and mnhG2.

It is found in the cell membrane. The sequence is that of Putative antiporter subunit mnhF2 (mnhF2) from Staphylococcus aureus (strain USA300).